Consider the following 226-residue polypeptide: MPKLPRIDFYFDVISPYSYIAFEVFQKLETQWKGVTIRYIPFFLGAVMKESGNRPPAMLPARSIMMMTDLKRTAKFWDIPLTPPPLFMEWIKKYRTTGAMKVLLVLQEQDKELMLRAAREMWVRLWSRSEKIFEDQDFVEVLKAVGVKNPEQIVEKSKDEKYIKILMENTNKGVDLMAYGAPWINVHTEDGSEHSFFGSDRFHLIADLLQQPQPLPDRLFGQKSKL.

Glutathione contacts are provided by residues 15 to 17 (SPY), Asn-53, and 199 to 200 (SD).

This sequence belongs to the GST superfamily. Kappa family.

The catalysed reaction is RX + glutathione = an S-substituted glutathione + a halide anion + H(+). This chain is Glutathione S-transferase kappa 1 (gstk-1), found in Caenorhabditis elegans.